The following is a 353-amino-acid chain: UPF0283 membrane protein YcjF (353 aa).

A run of 3 helical transmembrane segments spans residues 70 to 90 (MVMG…VQWT), 100 to 120 (VALG…GSVV), and 213 to 233 (ESTL…FIAW).

This sequence belongs to the UPF0283 family.

It is found in the cell inner membrane. This chain is UPF0283 membrane protein YcjF, found in Escherichia coli O7:K1 (strain IAI39 / ExPEC).